Here is a 662-residue protein sequence, read N- to C-terminus: Sodium/glucose cotransporter 1 (662 aa).

The Extracellular segment spans residues 1-24; the sequence is MDSSTWSPATTATTEPLKPHERIR. Residues 25–47 form a helical membrane-spanning segment; sequence NAADISVIVIYFVVVMAVGLWAM. Residues 48-66 are Cytoplasmic-facing; it reads CSTNRGTVGGFFLAGRSMV. The chain crosses the membrane as a helical span at residues 67–90; sequence WWPVGASLFASNIGSGHFVGLAGT. At 91–95 the chain is on the extracellular side; the sequence is GAAAG. A helical membrane pass occupies residues 96–117; that stretch reads IATGGFEWNALIWVVVLGWLFV. Topologically, residues 118–139 are cytoplasmic; it reads PIYIKAGVVTMPEYLRKRFGGK. A helical transmembrane segment spans residues 140-169; sequence RIQVYLSILSLMLYIFTKISADIFSGAIFI. Over 170–176 the chain is Extracellular; sequence TLALGLD. The chain crosses the membrane as a helical span at residues 177–193; it reads LYLAIFLLLAITGLYTI. The Cytoplasmic segment spans residues 194–202; the sequence is TGGLAAVIY. A helical membrane pass occupies residues 203-221; sequence TDTLQTAIMLVGSFILTGF. At 222–275 the chain is on the extracellular side; the sequence is AFHEVGGYDAFMEKYMNAIPTVISDGNITIKKECYTPRADSFHIFRDPLKGDLP. Asparagine 248 carries an N-linked (GlcNAc...) asparagine glycan. 5 disulfide bridges follow: cysteine 255–cysteine 511, cysteine 255–cysteine 608, cysteine 345–cysteine 351, cysteine 355–cysteine 361, and cysteine 517–cysteine 522. A helical membrane pass occupies residues 276 to 295; that stretch reads WPGLTFGLSILALWYWCTDQ. Residues 296-309 are Cytoplasmic-facing; sequence VIVQRCLSAKNMSH. Residues 310 to 331 form a helical membrane-spanning segment; sequence VKAGCVMCGYFKLLPMFVIVMP. At 332–375 the chain is on the extracellular side; it reads GMISRVLYTEKIACTVPSECEKYCGTKVGCSNIAYPTLVVELMP. A helical membrane pass occupies residues 376-406; it reads NGLRGLMLSVMLASLMSSLTSIFNSASTLFT. The Cytoplasmic segment spans residues 407-422; that stretch reads MDVYTKIRKRASEKEL. The helical transmembrane segment at 423–444 threads the bilayer; it reads MIAGRLFILVLIGISIAWVPIV. Topologically, residues 445–451 are extracellular; the sequence is QSAQSGQ. A helical transmembrane segment spans residues 452-477; sequence LFDYIQSVTSYLGPPIAAVFLLAIFC. The Cytoplasmic segment spans residues 478–481; the sequence is KRVN. The chain crosses the membrane as a helical span at residues 482 to 504; the sequence is EEGAFWGLVIGCMIGLARMITEF. Residues 505 to 525 are Extracellular-facing; the sequence is AYGTGSCVEPSNCPTIICGVH. The chain crosses the membrane as a helical span at residues 526-547; it reads YLYFAIILFVISIIIVLVVSLF. The Cytoplasmic portion of the chain corresponds to 548–642; sequence TKPIPDVHLY…TSEKPLWRTV (95 aa). Threonine 587 carries the phosphothreonine modification. The chain crosses the membrane as a helical span at residues 643 to 660; sequence VNINGIILLTVAVFCHAY. The Extracellular portion of the chain corresponds to 661–662; the sequence is FA.

The protein belongs to the sodium:solute symporter (SSF) (TC 2.A.21) family. In terms of processing, N-glycosylation is not necessary for the cotransporter function.

It localises to the apical cell membrane. It carries out the reaction D-glucose(out) + 2 Na(+)(out) = D-glucose(in) + 2 Na(+)(in). It catalyses the reaction D-galactose(out) + 2 Na(+)(out) = D-galactose(in) + 2 Na(+)(in). Enhanced by the interaction with PDZK1IP1/MAP17; but unlike SLC5A2/SGLT2, PDZK1IP1 is not essential for SLC5A1 transporter activity. Possibly modulated by cholesterol binding. In terms of biological role, electrogenic Na(+)-coupled sugar symporter that actively transports D-glucose or D-galactose at the plasma membrane, with a Na(+) to sugar coupling ratio of 2:1. Transporter activity is driven by a transmembrane Na(+) electrochemical gradient set by the Na(+)/K(+) pump. Has a primary role in the transport of dietary monosaccharides from enterocytes to blood. Responsible for the absorption of D-glucose or D-galactose across the apical brush-border membrane of enterocytes, whereas basolateral exit is provided by GLUT2. Additionally, functions as a D-glucose sensor in enteroendocrine cells, triggering the secretion of the incretins GCG and GIP that control food intake and energy homeostasis. Together with SGLT2, functions in reabsorption of D-glucose from glomerular filtrate, playing a nonredundant role in the S3 segment of the proximal tubules. Transports D-glucose into endometrial epithelial cells, controlling glycogen synthesis and nutritional support for the embryo as well as the decidual transformation of endometrium prior to conception. Acts as a water channel enabling passive water transport in response to the osmotic gradient created upon sugar and Na(+) uptake. Has high water conductivity comparable to aquaporins and therefore is expected to play an important role in transepithelial water permeability, especially in the small intestine. In Sus scrofa (Pig), this protein is Sodium/glucose cotransporter 1 (SLC5A1).